The sequence spans 230 residues: Interleukin-22 receptor subunit alpha-2 (230 aa).

An N-terminal signal peptide occupies residues 1-20; sequence MMPKHCLLGLLIILLSSATE. Fibronectin type-III domains lie at 29–128 and 129–230; these read TPQK…TKLD and PPVV…VHIP. 2 disulfide bridges follow: Cys77–Cys85 and Cys205–Cys226.

The protein belongs to the type II cytokine receptor family. Highly expressed in lymph nodes and at lower levels in lung, spleen, and thymus. Not expressed in kidney, liver and heart.

Its subcellular location is the secreted. Functionally, receptor for IL22. Binds to IL22, prevents interaction with the functional IL-22R complex and blocks the activity of IL22 (in vitro). May play an important role as an IL22 antagonist in the regulation of inflammatory responses. The chain is Interleukin-22 receptor subunit alpha-2 (Il22ra2) from Mus musculus (Mouse).